The primary structure comprises 601 residues: HIRA-interacting protein 3 (601 aa).

Disordered stretches follow at residues 60–469 (KMQA…EDHP) and 546–601 (STGR…GDSS). Basic and acidic residues predominate over residues 66–76 (GTREGKPDFIK). Phosphoserine is present on residues serine 85, serine 96, and serine 98. Positions 97 to 113 (ESESSSSPSSPDGSGPS) are enriched in low complexity. The segment covering 117–129 (RTTKKTCLRRALK) has biased composition (basic residues). Over residues 130-149 (KAVESTDEDHQTDLDAKMGL) the composition is skewed to basic and acidic residues. Serine 134 is modified (phosphoserine). Phosphothreonine occurs at positions 135 and 141. Serine 152, serine 153, and serine 163 each carry phosphoserine. Position 167 is a phosphothreonine (threonine 167). Residues 186–205 (GAKDKQVPLKADRKQVREES) show a composition bias toward basic and acidic residues. 11 positions are modified to phosphoserine: serine 205, serine 207, serine 208, serine 231, serine 234, serine 238, serine 313, serine 359, serine 360, serine 384, and serine 389. 2 stretches are compositionally biased toward basic and acidic residues: residues 238-264 (SPAKKKELSEPRSRSNRAERTARERKS) and 313-324 (SSEKGEAEKEEG). Residues 347–378 (RTQTESGRRQNTSSRDDSNSTQEQAAAQGTTK) are compositionally biased toward polar residues. Over residues 379-388 (SGSLGSSNGD) the composition is skewed to low complexity. At threonine 391 the chain carries Phosphothreonine. Residues serine 396 and serine 398 each carry the phosphoserine modification. Residues 413–432 (SNKSSKNGQARSCSSSSDSS) are compositionally biased toward low complexity. An interaction with the histone H2A-H2B complex region spans residues 429 to 572 (SDSSPEPTGQ…TSPGETYRRT (144 aa)). Residues 556 to 566 (WNPSGEGTSPG) are compositionally biased toward polar residues. Phosphoserine occurs at positions 564, 575, 595, 596, and 600. Over residues 568–580 (TYRRTLDSEEEQP) the composition is skewed to basic and acidic residues.

As to quaternary structure, interacts (via C-terminus) with histone H2A-H2B dimers; the interaction is direct. Interacts with HIRA. Interacts with CK2. Phosphorylated by CK2.

It localises to the nucleus. In terms of biological role, histone chaperone that carries a H2A-H2B histone complex and facilitates its deposition onto chromatin. The chain is HIRA-interacting protein 3 from Mus musculus (Mouse).